The primary structure comprises 1474 residues: Alpha-2-macroglobulin (1474 aa).

The N-terminal stretch at 1 to 23 (MGKNKLLHPSLVLLLLVLLPTDA) is a signal peptide. A disulfide bond links Cys48 and Cys86. N-linked (GlcNAc...) asparagine glycans are attached at residues Asn55, Asn70, and Asn247. Cystine bridges form between Cys251–Cys299 and Cys269–Cys287. 2 N-linked (GlcNAc...) asparagine glycosylation sites follow: Asn396 and Asn410. Disulfide bonds link Cys470-Cys563, Cys595-Cys771, Cys642-Cys689, Cys821-Cys849, Cys847-Cys883, Cys921-Cys1321, Cys1079-Cys1127, and Cys1352-Cys1467. The tract at residues 690-728 (PQLQQYEMHGPEGLRVGFYESDVMGRGHARLVHAEEPPT) is bait region. Residues Gln693 and Gln694 each participate in an isoglutamyl lysine isopeptide (Gln-Lys) (interchain with K-? in other proteins) cross-link. 3 inhibitory regions span residues 704 to 709 (RVGFYE), 719 to 723 (RLVHA), and 730 to 735 (TVRKYF). The N-linked (GlcNAc...) asparagine glycan is linked to Asn869. Residues 972-975 (CGEQ) constitute a cross-link (isoglutamyl cysteine thioester (Cys-Gln)). A glycan (N-linked (GlcNAc...) asparagine) is linked at Asn991. Asn1424 carries N-linked (GlcNAc...) asparagine glycosylation.

The protein belongs to the protease inhibitor I39 (alpha-2-macroglobulin) family. Homotetramer; disulfide-linked. In terms of tissue distribution, plasma.

It is found in the secreted. Is able to inhibit all four classes of proteinases by a unique 'trapping' mechanism. This protein has a peptide stretch, called the 'bait region' which contains specific cleavage sites for different proteinases. When a proteinase cleaves the bait region, a conformational change is induced in the protein which traps the proteinase. The entrapped enzyme remains active against low molecular weight substrates (activity against high molecular weight substrates is greatly reduced). Following cleavage in the bait region a thioester bond is hydrolyzed and mediates the covalent binding of the protein to the proteinase. The polypeptide is Alpha-2-macroglobulin (A2M) (Pongo abelii (Sumatran orangutan)).